The sequence spans 392 residues: ATP-dependent RNA helicase eIF4A (392 aa).

The Q motif motif lies at Asp19 to Gln47. Residues Ile50–Ile220 enclose the Helicase ATP-binding domain. Ala63–Thr70 is a binding site for ATP. Ser65 carries the post-translational modification Phosphoserine. Residues Asp168–Asp171 carry the DEAD box motif. The 162-residue stretch at Gly231–Ile392 folds into the Helicase C-terminal domain.

The protein belongs to the DEAD box helicase family. eIF4A subfamily. Component of the eIF4F complex, which composition varies with external and internal environmental conditions. It is composed of at least eIF4A, eIF4E and eIF4G.

It localises to the cytoplasm. It catalyses the reaction ATP + H2O = ADP + phosphate + H(+). Functionally, ATP-dependent RNA helicase which is a subunit of the eIF4F complex involved in cap recognition and is required for mRNA binding to ribosome. In the current model of translation initiation, eIF4A unwinds RNA secondary structures in the 5'-UTR of mRNAs which is necessary to allow efficient binding of the small ribosomal subunit, and subsequent scanning for the initiator codon. This is ATP-dependent RNA helicase eIF4A (tif1) from Schizosaccharomyces pombe (strain 972 / ATCC 24843) (Fission yeast).